The primary structure comprises 206 residues: Ras-related protein ralB-A (206 aa).

GTP is bound at residue 21 to 28; that stretch reads GSGGVGKS. The short motif at 43–51 is the Effector region element; the sequence is YEPTKADSY. Residues 68 to 72 and 128 to 131 each bind GTP; these read DTAGQ and NKSD. A compositionally biased stretch (basic and acidic residues) spans 180 to 189; that stretch reads KMSENKDKNG. A disordered region spans residues 180 to 206; that stretch reads KMSENKDKNGKKSGKSKKGFKQRCCLL. The span at 190-200 shows a compositional bias: basic residues; that stretch reads KKSGKSKKGFK. Cys203 is modified (cysteine methyl ester). Cys203 is lipidated: S-geranylgeranyl cysteine. A propeptide spans 204–206 (removed in mature form); sequence CLL.

The protein belongs to the small GTPase superfamily. Ras family. In terms of assembly, interacts with ralbp1 and rap1gds1. Weakly expressed in adult tissues and highest levels were found in heart, brain and testes.

The protein resides in the cell membrane. It localises to the midbody. It catalyses the reaction GTP + H2O = GDP + phosphate + H(+). Functionally, multifunctional GTPase involved in a variety of cellular processes including gene expression, cell migration, cell proliferation, oncogenic transformation and membrane trafficking. Accomplishes its multiple functions by interacting with distinct downstream effectors. Acts as a GTP sensor for GTP-dependent exocytosis of dense core vesicles. Required both to stabilize the assembly of the exocyst complex and to localize functional exocyst complexes to the leading edge of migrating cells. Required for suppression of apoptosis. In late stages of cytokinesis, upon completion of the bridge formation between dividing cells, mediates exocyst recruitment to the midbody to drive abscission. Regulates the actin cytoskeleton to play a role in gastrulation or neurulation. During the cleavage stages, the GTP-bound form induces a cortical reaction that affects the localization of pigment granules. Activated by the FGF pathway via ras and ral-GDS, but independently of raf. Directs ralbp1 to the plasma membrane. Involved in ligand-dependent receptor mediated endocytosis of the EGF and insulin receptors. The protein is Ras-related protein ralB-A (ralb-a) of Xenopus laevis (African clawed frog).